The sequence spans 159 residues: C-type lectin 1 (159 aa).

Positions 1-23 (MGRFIFISFGLLVVFFFLSGAKG) are cleaved as a signal peptide. Cystine bridges form between Cys26–Cys37, Cys54–Cys155, Cys61–Cys157, and Cys130–Cys147. Positions 33–156 (MYGLCYKIFD…CKVKNAFLCQ (124 aa)) constitute a C-type lectin domain. Asn118 carries N-linked (GlcNAc...) asparagine glycosylation. Residues 119–121 (LTD) carry the Sugar-binding motif. Residues Asp121, Asp127, and Asn143 each contribute to the Ca(2+) site.

It belongs to the true venom lectin family. Homodimer; disulfide-linked. In terms of tissue distribution, expressed by the venom gland.

It is found in the secreted. Lectin which recognizes specific carbohydrate structures and agglutinates a variety of animal cells by binding to cell-surface glycoproteins and glycolipids. May be a calcium-dependent lectin. The chain is C-type lectin 1 from Bitis gabonica (Gaboon adder).